The chain runs to 341 residues: Glycerol-1-phosphate dehydrogenase [NAD(P)+] (341 aa).

NAD(+)-binding positions include 81–85 and 103–106; these read GKAID and TTAS. Asp108 provides a ligand contact to substrate. Ser112 serves as a coordination point for NAD(+). A substrate-binding site is contributed by Asp151. Zn(2+) contacts are provided by Asp151 and His232. His236 lines the substrate pocket. His253 contributes to the Zn(2+) binding site.

Belongs to the glycerol-1-phosphate dehydrogenase family. The cofactor is Zn(2+).

It is found in the cytoplasm. It carries out the reaction sn-glycerol 1-phosphate + NAD(+) = dihydroxyacetone phosphate + NADH + H(+). The catalysed reaction is sn-glycerol 1-phosphate + NADP(+) = dihydroxyacetone phosphate + NADPH + H(+). It participates in membrane lipid metabolism; glycerophospholipid metabolism. Functionally, catalyzes the NAD(P)H-dependent reduction of dihydroxyacetonephosphate (DHAP or glycerone phosphate) to glycerol 1-phosphate (G1P). The G1P thus generated is used as the glycerophosphate backbone of phospholipids in the cellular membranes of Archaea. The sequence is that of Glycerol-1-phosphate dehydrogenase [NAD(P)+] from Methanococcus aeolicus (strain ATCC BAA-1280 / DSM 17508 / OCM 812 / Nankai-3).